An 89-amino-acid polypeptide reads, in one-letter code: Bombyxin B-1 (89 aa).

Positions 1 to 19 (MKTSVMFMLVIVISLMCSG) are cleaved as a signal peptide. 3 cysteine pairs are disulfide-bonded: cysteine 29/cysteine 75, cysteine 41/cysteine 88, and cysteine 74/cysteine 79. Residues 48 to 66 (GGAQYAPYFWTRQYLGSRG) constitute a propeptide, c peptide like.

This sequence belongs to the insulin family. Heterodimer of a B chain and an A chain linked by two disulfide bonds.

Its subcellular location is the secreted. Brain peptide responsible for activation of prothoracic glands to produce ecdysone in insects. In Bombyx mori (Silk moth), this protein is Bombyxin B-1 (BBXB1).